We begin with the raw amino-acid sequence, 287 residues long: Agamous-like MADS-box protein AGL53 (287 aa).

Positions 30-78 constitute an MADS-box domain; sequence STAKKTTNLSMREQTMFKKALELSTLCNIDVCVIYYGRDGKLIKTWPED. Residues 151-171 are disordered; sequence EFGQTRAVSSTTNPLSPPPSL.

Interacts with MEE14/CBP1.

It is found in the nucleus. Its function is as follows. Probable transcription factor that may function in the maintenance of the proper function of the central cell in pollen tube attraction. The sequence is that of Agamous-like MADS-box protein AGL53 from Arabidopsis thaliana (Mouse-ear cress).